The sequence spans 125 residues: Succinate dehydrogenase cytochrome b560 subunit (125 aa).

Helical transmembrane passes span 29–49 (ISGV…KLAT), 68–88 (ILPW…INGI), and 104–124 (IIKD…FKFI). His83 serves as a coordination point for heme.

This sequence belongs to the cytochrome b560 family. In terms of assembly, forms part of complex II containing four subunits: a 70 kDa flavoprotein (FP), a 27 kDa iron-sulfur protein (IP), a cytochrome B and a membrane-anchoring protein. The cofactor is heme.

The protein resides in the mitochondrion inner membrane. It participates in carbohydrate metabolism; tricarboxylic acid cycle. Membrane-anchoring subunit of succinate dehydrogenase (SDH) that is involved in complex II of the mitochondrial electron transport chain and is responsible for transferring electrons from succinate to ubiquinone (coenzyme Q). The polypeptide is Succinate dehydrogenase cytochrome b560 subunit (SDH3) (Porphyra purpurea (Red seaweed)).